Here is a 1254-residue protein sequence, read N- to C-terminus: MKLKEINRTAIQAWSPAQQHPIYLAAGTSAQQLDATFSTNASLEIFELDLADSALAMKSCGSFSSPHRYHKLVWGPHGIENQGLPSGVLIAGGENGNIILYDASKIIAGDSEVIISQSEKHTGAVRALDVNSFQSNLVASGGNESEIYIWDLNNFSSPMTPGPKTQPQEDISCVAWNKQVQHILASASPSGKASVWDLRKNDLIIKVSDHSNRMHCSGLAWNPEVATQLVLASEDDRMPVIQMWDLRFATSPLKVLENHTRGILAIAWSVADPELLLSCGKDNRILCWNPNTAEVLYELPTSTQWCFDIQWCPRNPAVLSAAAFDGHISIYSIMGGSNDNANNLQADQLSSSFGNVDPFGTGKTLPPLQLPQQTSPQSTITPLKKPPKWIRRPVGASFAFGGKLVTLDNIKPTAQQPQQTAAHVVHISQVVTETDFIHRSNQLQTTLNAGNFLEYCQNKIETVQNEFERTVWSFLKVNFEEDARLKYLELLGYEKEELALKIASALEGNCKPKEADMDKEEVLAEEEAESDLDDIPVNEEEPVVEETSNTEVPPAPASDAINLKVSQDIDGLITQALLTGDYEAAVNLCLHDNRMADGIILAIAGGPELLAKTQRKYFSKTESKISKLISAVVMKDWLDILETCDLQNWKEALAAVMTYAKPEEFSALCGLLGSRLESSEDVELQAQACLCYICAGTVEQLVSFWTKTQDSCSPLSLQELVEKVVVLQRAVEKAQGAVPADMGALLAEKMNQYASLLASQGSLQTAISYLPTNTEQVSVQQLRERLSRALGQHQHLQQPAAAVTGIQKMHQRRPAAVPMQTYTQPQPPQVPAQPAAPAVPPQYYQQGRSATTVTSWSNQTPTALPSVPRQLVPSSDPQGDSTPPAFGLQSPAMASVPASTPFMYSQQYQNYPPVQQFTPSAGTPGIYQPLPYASSAGAPLPPPPSSSSSAAVYPPQFMLSASSQASAPPQSFCPPPAVSSGGCFQHGGPGSPTSYLPPPGARAPGTQHEPALIPASQRTDGFYQETAWGLEGPQNGWNDPPALSRAAKKKKVPQHFTPPAPITAPIMAPLGDPQAPAGMQTLQPQQQVPDQSAGPATFTPIQQQPLGPRNPSMPQGNMEGAPGAPIGDVIKPLQAIPTEKITKKPIPEEHMVLKTTFEGLIQKCLTAASDPQTKRKLDDAHKRLELLYDKLREQTLSPAIIGGLHNMAQSIECRSYADGLNIHTHIVSNSNFSETSAFMPVLKVVLTQANKLGV.

WD repeat units follow at residues 4 to 47, 64 to 111, 120 to 160, 166 to 206, 209 to 254, 258 to 298, and 301 to 341; these read KEIN…EIFE, SSPH…AGDS, KHTG…SPMT, QPQE…LIIK, DHSN…SPLK, NHTR…VLYE, and TSTQ…NDNA. A compositionally biased stretch (low complexity) spans 364 to 383; sequence TLPPLQLPQQTSPQSTITPL. Positions 364–386 are disordered; the sequence is TLPPLQLPQQTSPQSTITPLKKP. One copy of the WD 8; interaction with SEC13 repeat lies at 397–428; it reads SFAFGGKLVTLDNIKPTAQQPQQTAAHVVHIS. 3 disordered regions span residues 818-892, 983-1008, and 1058-1125; these read PMQT…QSPA, CFQH…GTQH, and PPAP…PGAP. A compositionally biased stretch (low complexity) spans 832–846; it reads AQPAAPAVPPQYYQQ. Composition is skewed to polar residues over residues 847–863 and 872–881; these read GRSA…TPTA and VPSSDPQGDS. Residues 1080–1091 show a composition bias toward low complexity; that stretch reads QTLQPQQQVPDQ.

Belongs to the WD repeat SEC31 family. COPII is composed of at least 5 proteins: the SEC23/24 complex, the SEC13/31 complex and SAR1. SEC13 and SEC31 make a 2:2 tetramer that forms the edge element of the COPII outer coat. The tetramer self-assembles in multiple copies to form the complete polyhedral cage. Interacts (via WD 8) with SEC13.

The protein localises to the cytoplasm. It localises to the cytoplasmic vesicle. The protein resides in the COPII-coated vesicle membrane. Its subcellular location is the endoplasmic reticulum membrane. Its function is as follows. Component of the coat protein complex II (COPII) which promotes the formation of transport vesicles from the endoplasmic reticulum (ER). The coat has two main functions, the physical deformation of the endoplasmic reticulum membrane into vesicles and the selection of cargo molecules. In Danio rerio (Zebrafish), this protein is Protein transport protein Sec31A (sec31a).